Consider the following 793-residue polypeptide: Protein PAT1 homolog (793 aa).

Phosphoserine occurs at positions 200 and 208. Disordered stretches follow at residues 203-256 (PPGS…TGNR) and 292-312 (MLQQ…GSQN). The span at 219-242 (PYQSGGPQMGSPNFSPFPNLQPQL) shows a compositional bias: polar residues. S342 and S343 each carry phosphoserine. The tract at residues 476-501 (RPLLEVDPPNSAKFGNAEHKPTDKPL) is disordered. Basic and acidic residues predominate over residues 491-501 (NAEHKPTDKPL).

As to quaternary structure, interacts with MPK4 and SUMM2. Phosphorylated at Ser-208 by MPK4 upon flg22 elicitation. Phosphorylated at Ser-200, Ser-342 and Ser-343 upon flg22 elicitation.

The protein resides in the cytoplasm. Its subcellular location is the P-body. Activator of mRNA decapping. Involved in mRNA decay via decapping. Involved in disease resistance in response to biotrophic and necrotrophic pathogens. Is part of a signaling pathway including MPK4 and the disease resistance protein SUMM2. The chain is Protein PAT1 homolog from Arabidopsis thaliana (Mouse-ear cress).